Consider the following 443-residue polypeptide: ATP-dependent protease ATPase subunit HslU (443 aa).

Residues Ile-18, 60-65 (GVGKTE), Asp-256, Glu-321, and Arg-393 each bind ATP.

It belongs to the ClpX chaperone family. HslU subfamily. A double ring-shaped homohexamer of HslV is capped on each side by a ring-shaped HslU homohexamer. The assembly of the HslU/HslV complex is dependent on binding of ATP.

Its subcellular location is the cytoplasm. In terms of biological role, ATPase subunit of a proteasome-like degradation complex; this subunit has chaperone activity. The binding of ATP and its subsequent hydrolysis by HslU are essential for unfolding of protein substrates subsequently hydrolyzed by HslV. HslU recognizes the N-terminal part of its protein substrates and unfolds these before they are guided to HslV for hydrolysis. This chain is ATP-dependent protease ATPase subunit HslU, found in Salmonella typhi.